A 448-amino-acid chain; its full sequence is Homogentisate 1,2-dioxygenase (448 aa).

His-303 functions as the Proton acceptor in the catalytic mechanism. Positions 346 and 352 each coordinate Fe cation. Residues Tyr-361 and His-382 each coordinate homogentisate. Fe cation is bound at residue His-382.

The protein belongs to the homogentisate dioxygenase family. In terms of assembly, hexamer; dimer of trimers. Requires Fe cation as cofactor.

The enzyme catalyses homogentisate + O2 = 4-maleylacetoacetate + H(+). Its pathway is amino-acid degradation; L-phenylalanine degradation; acetoacetate and fumarate from L-phenylalanine: step 4/6. In terms of biological role, involved in the catabolism of homogentisate (2,5-dihydroxyphenylacetate or 2,5-OH-PhAc), a central intermediate in the degradation of phenylalanine and tyrosine. Catalyzes the oxidative ring cleavage of the aromatic ring of homogentisate to yield maleylacetoacetate. The protein is Homogentisate 1,2-dioxygenase of Rhodopseudomonas palustris (strain BisA53).